The sequence spans 485 residues: PTS system arbutin-, cellobiose-, and salicin-specific EIIBC component (485 aa).

The region spanning 1 to 88 (MAKNYAALAR…VSLLPGDMQP (88 aa)) is the PTS EIIB type-1 domain. Cys28 acts as the Phosphocysteine intermediate; for EIIB activity in catalysis. 10 helical membrane-spanning segments follow: residues 102–122 (IGAG…PAII), 147–167 (LTIL…MVAA), 177–197 (MSLA…ELMA), 207–227 (FALI…ALVM), 254–274 (LIVL…GIWI), 285–305 (IHGY…PLLV), 330–350 (VMPS…AVAW), 363–383 (AAAA…GVAI), 389–409 (LIAS…AGLA), and 433–453 (IVWV…LTLL). One can recognise a PTS EIIC type-1 domain in the interval 108–470 (DALIGTMSPL…VEEAAAQARK (363 aa)).

It is found in the cell inner membrane. Functionally, the phosphoenolpyruvate-dependent sugar phosphotransferase system (sugar PTS), a major carbohydrate active -transport system, catalyzes the phosphorylation of incoming sugar substrates concomitantly with their translocation across the cell membrane. This system is involved in arbutin, cellobiose, and salicin transport. The sequence is that of PTS system arbutin-, cellobiose-, and salicin-specific EIIBC component (ascF) from Escherichia coli (strain K12).